The chain runs to 113 residues: CRISPR-associated endoribonuclease Cas2 (113 aa).

Mg(2+) is bound at residue Asp-33.

It belongs to the CRISPR-associated endoribonuclease Cas2 protein family. In terms of assembly, homodimer, forms a heterotetramer with a Cas1 homodimer. Requires Mg(2+) as cofactor.

CRISPR (clustered regularly interspaced short palindromic repeat), is an adaptive immune system that provides protection against mobile genetic elements (viruses, transposable elements and conjugative plasmids). CRISPR clusters contain sequences complementary to antecedent mobile elements and target invading nucleic acids. CRISPR clusters are transcribed and processed into CRISPR RNA (crRNA). Functions as a ssRNA-specific endoribonuclease. Involved in the integration of spacer DNA into the CRISPR cassette. The type III-A Csm effector complex binds crRNA and acts as a crRNA-guided RNase, DNase and cyclic oligoadenylate synthase; binding of target RNA cognate to the crRNA is required for all activities. In Mycobacterium tuberculosis (strain CDC 1551 / Oshkosh), this protein is CRISPR-associated endoribonuclease Cas2.